Reading from the N-terminus, the 168-residue chain is Urease accessory protein UreE (168 aa).

The tract at residues 145 to 168 (EGGAYAAGQGGGHGPHGQHTHPHH) is disordered.

The protein belongs to the UreE family.

The protein localises to the cytoplasm. Its function is as follows. Involved in urease metallocenter assembly. Binds nickel. Probably functions as a nickel donor during metallocenter assembly. The sequence is that of Urease accessory protein UreE from Verminephrobacter eiseniae (strain EF01-2).